The sequence spans 375 residues: 23S rRNA (uracil(747)-C(5))-methyltransferase RlmC (375 aa).

Residues C3, C11, C14, and C87 each contribute to the [4Fe-4S] cluster site. S-adenosyl-L-methionine-binding residues include Q212, F241, E262, and N307. The Nucleophile role is filled by C334.

This sequence belongs to the class I-like SAM-binding methyltransferase superfamily. RNA M5U methyltransferase family. RlmC subfamily.

It catalyses the reaction uridine(747) in 23S rRNA + S-adenosyl-L-methionine = 5-methyluridine(747) in 23S rRNA + S-adenosyl-L-homocysteine + H(+). In terms of biological role, catalyzes the formation of 5-methyl-uridine at position 747 (m5U747) in 23S rRNA. This chain is 23S rRNA (uracil(747)-C(5))-methyltransferase RlmC, found in Shigella sonnei (strain Ss046).